The chain runs to 58 residues: Ribosome biogenesis protein Nop10 (58 aa).

Belongs to the NOP10 family.

Functionally, involved in ribosome biogenesis; more specifically in 18S rRNA pseudouridylation and in cleavage of pre-rRNA. The polypeptide is Ribosome biogenesis protein Nop10 (Methanobrevibacter smithii (strain ATCC 35061 / DSM 861 / OCM 144 / PS)).